The chain runs to 145 residues: Large ribosomal subunit protein uL15 (145 aa).

Residues 1–50 (MLHTIKPVANARKTTKRLGRGPGSGTGKTSGKGHKGQLARSGKTLRPGFE) form a disordered region. Residues 20–30 (RGPGSGTGKTS) show a composition bias toward gly residues.

It belongs to the universal ribosomal protein uL15 family. Part of the 50S ribosomal subunit.

Its function is as follows. Binds to the 23S rRNA. This chain is Large ribosomal subunit protein uL15, found in Phytoplasma australiense.